The chain runs to 89 residues: Signal recognition particle 19 kDa protein (89 aa).

This sequence belongs to the SRP19 family. Part of the signal recognition particle protein translocation system, which is composed of SRP and FtsY. Archaeal SRP consists of a 7S RNA molecule of 300 nucleotides and two protein subunits: SRP54 and SRP19.

It localises to the cytoplasm. In terms of biological role, involved in targeting and insertion of nascent membrane proteins into the cytoplasmic membrane. Binds directly to 7S RNA and mediates binding of the 54 kDa subunit of the SRP. This is Signal recognition particle 19 kDa protein from Methanococcus maripaludis (strain C7 / ATCC BAA-1331).